A 266-amino-acid polypeptide reads, in one-letter code: MSVKVMTHDNMFVGMKEVDHYLAPSDYEDESESELFYESYYSDDIFEDNESDLWVDHEDDPWIEQLDDPVKTPKIIKPYPWMTSPTKSVDKAAQKEKKMPDWWTKPTTVTPTRNEQGILNYSLLLPPSTKKPTQPNKRRKNGGAKPPNSKPLGNPAKPNGVSQQQQGPKRDSTQQPTRLCKSVLKQAKCYFGAQCGYAHRYSDLKECSYGKNCKKIVLVRVNQDGTLHLANKPGAVCNFKHTNEAQQSYLARLPQSTASPKNPRKK.

Residues Ser84–Pro176 form a disordered region. Basic and acidic residues predominate over residues Ser88 to Pro100. 2 stretches are compositionally biased toward polar residues: residues Lys105 to Leu119 and Gly160 to Pro176. Residues Cys180–Gly192 form a C3H1-type zinc finger.

It belongs to the IIV-6 077L family.

In Aedes vexans (Inland floodwater mosquito), this protein is Putative zinc finger protein 034R.